A 568-amino-acid polypeptide reads, in one-letter code: Phosphoprotein (568 aa).

2 disordered regions span residues 1–23 (MDQD…GGRE) and 38–320 (SEPT…GIGE). Over residues 7-20 (ILKEDSEVEREAPG) the composition is skewed to basic and acidic residues. The N0 binding stretch occupies residues 33-41 (DAVLSSEPT). The span at 50-59 (LHNTINTPQG) shows a compositional bias: polar residues. Ser-68 carries the post-translational modification Phosphoserine; by host. Basic and acidic residues predominate over residues 83–101 (RSGEESRVSGRTSKPEAEA). Ser-125 carries the post-translational modification Phosphoserine; by host. Basic and acidic residues predominate over residues 150 to 168 (GIEDENREMAAHPDKRGED). The span at 191-206 (ASNNGRSMEPGSSHSA) shows a compositional bias: polar residues. Residues Ser-192, Ser-249, Ser-257, and Ser-260 each carry the phosphoserine; by host modification. Positions 344 to 411 (FESSRDASYV…SFRDTYKRFS (68 aa)) are multimerization. Positions 364–429 (YAEMTFNVCG…LLMSNLSTLH (66 aa)) form a coiled coil. Residues 412–445 (EYQKEQNSLLMSNLSTLHIITDRGGKTDNTDSLT) form a l protein binding region. Phosphoserine; by host occurs at positions 447 and 449. The segment at 479–568 (DLIREDEFRD…VEEDIESLTN (90 aa)) is interaction with the nucleocapsid (N-RNA). The interval 496–516 (QERDTEPRASNASRLLPSKEK) is disordered.

This sequence belongs to the respirovirus P protein family. As to quaternary structure, homotetramer. Interacts (via multimerization domain) with polymerase L; this interaction forms the polymerase complex. Interacts (via N-terminus) with N0; this interaction allows P to chaperon N0 before encapsidation and form the N-P complex. Interacts (via C-terminus) with N-RNA template; this interaction positions the polymerase on the template. Post-translationally, phosphorylated by PKC/PRKCZ, and other unknown kinases. Phosphorylation is necessary for viral transcription and replication. The N-terminus contains the majority of phosphorylated sites. Ser-249 is the major site of phosphorylation, but is not necessary for most functions.

In terms of biological role, essential cofactor of the RNA polymerase L that plays a central role in the transcription and replication by forming the polymerase complex with RNA polymerase L and recruiting L to the genomic N-RNA template for RNA synthesis. Also plays a central role in the encapsidation of nascent RNA chains by forming the encapsidation complex with the nucleocapsid protein N (N-P complex). Acts as a chaperone for newly synthesized free N protein, so-called N0, allowing encapsidation of nascent RNA chains during replication. The nucleoprotein protein N prevents excessive phosphorylation of P, which leads to down-regulation of viral transcription/ replication. Participates, together with N, in the formation of viral factories (viroplasms), which are large inclusions in the host cytoplasm where replication takes place. Recruits host PI4KB and remodel the host endoplasmic reticulum membrane to form viral replication factories. This Sendai virus (strain Z) (SeV) protein is Phosphoprotein (P/V/C).